The following is a 255-amino-acid chain: Syntaxin-23 (255 aa).

Residues 1–31 form a disordered region; sequence MSFQDLEAGRGRSLASSRNINGGGSRQDTTQ. Position 2 is an N-acetylserine (Ser-2). The span at 14-31 shows a compositional bias: polar residues; the sequence is LASSRNINGGGSRQDTTQ. One can recognise a t-SNARE coiled-coil homology domain in the interval 184-246; that stretch reads EAVIEEREQG…AQGKSHLVRH (63 aa).

The protein belongs to the syntaxin family. Part of the t-SNARE complex. Interacts with RGS1. As to expression, expressed at higher levels in leaves, flowers and stems than in roots.

The protein resides in the membrane. Its function is as follows. May function in the docking or fusion of transport vesicles with the prevacuolar membrane. This Arabidopsis thaliana (Mouse-ear cress) protein is Syntaxin-23 (SYP23).